The following is a 529-amino-acid chain: N5-hydroxyornithine acetylase sidL (529 aa).

Disordered regions lie at residues 59 to 95 and 239 to 258; these read ASVN…VRPF and SPWP…SPVA. Residue His462 participates in substrate binding. The active-site Proton acceptor is the Glu498.

It belongs to the lysine N-acyltransferase mbtK family.

Its subcellular location is the cytoplasm. The protein localises to the cytosol. It participates in siderophore biosynthesis. Acyltransferase; part of the gene cluster that mediates the biosynthesis of at least 11 siderophores, including beauverichelin A, dimerumic acid (DA), Na-dimethyl coprogen (NADC), eleutherazine B, ferricrocin (FC), fusarinine A, fusarinine C (FsC), metachelin A, mevalonolactone, rhodotorulic acid (RA) and tenellin. This cocktail of siderophores for iron metabolism is essential for virulence, and more specifically for the fungal virulence in penetrating through the host cuticle. Siderophore synthesis is also involved in conidial germination under iron-deficient conditions. SIDL contributes to partial production of ferricrocin under iron-limiting conditions via the acetylation of N(5)-hydroxyornithine. In Beauveria bassiana (strain ARSEF 2860) (White muscardine disease fungus), this protein is N5-hydroxyornithine acetylase sidL.